Consider the following 685-residue polypeptide: Stromal interaction molecule 1 (685 aa).

Positions 1-22 are cleaved as a signal peptide; it reads MDVCARLALWLLWGLLLHQGQS. Topologically, residues 23–213 are extracellular; sequence LSHSHSEKNT…LLTRHNHLKD (191 aa). The segment at 24–43 is disordered; the sequence is SHSHSEKNTGASSGATSEES. Low complexity predominate over residues 32-41; that stretch reads TGASSGATSE. EF-hand domains follow at residues 64-97 and 102-126; these read SFEA…EDLN and TVKH…AWKS. The Ca(2+) site is built by D76, D78, N80, D82, and E87. N-linked (GlcNAc...) asparagine glycans are attached at residues N131 and N171. The 69-residue stretch at 132-200 folds into the SAM domain; the sequence is WTVDEVIQWL…QLKALDTVLF (69 aa). A helical membrane pass occupies residues 214–234; sequence FMLVVSIVIGVGGCWFAYIQN. Residues 235–685 are Cytoplasmic-facing; sequence RYSKEHMKKM…LKIFKKPLKK (451 aa). A coiled-coil region spans residues 248–442; the sequence is LEGLHRAEQS…IEILCGFQIV (195 aa). Position 257 is a phosphoserine (S257). Residues 344 to 442 are SOAR/CAD; it reads PEALQKWLQL…IEILCGFQIV (99 aa). The segment at 475 to 483 is contributes to fast Ca(2+)-dependent inactivation of CRAC channels; that stretch reads DDVDDMDEE. The segment covering 490–499 has biased composition (low complexity); it reads MQSPSLQSSV. A disordered region spans residues 490–541; the sequence is MQSPSLQSSVRQRLTEPQLGLGSQRDLTHSDSESSLHMSDRQRVAPKPPQMG. T504 is modified (phosphothreonine). A Phosphoserine modification is found at S512. A compositionally biased stretch (basic and acidic residues) spans 515–532; the sequence is DLTHSDSESSLHMSDRQR. Position 517 is a phosphothreonine (T517). A phosphoserine mark is found at S519, S521, S523, S524, S567, S575, S602, S608, S618, S621, and S628. A disordered region spans residues 596–685; sequence LMELNPSVPP…LKIFKKPLKK (90 aa). Residues 608–620 show a composition bias toward low complexity; sequence SPLLDSSHSLSPS. The short motif at 642–645 is the Microtubule tip localization signal element; it reads TRIP. Residues 655-666 are compositionally biased toward acidic residues; that stretch reads EEDNGSIGEETD. Position 660 is a phosphoserine (S660). T665 carries the post-translational modification Phosphothreonine. S668 is subject to Phosphoserine. Residues 670 to 685 are compositionally biased toward basic residues; sequence GRKKFPLKIFKKPLKK. The interval 672–685 is required for generation of inwardly rectifying CRAC currents; sequence KKFPLKIFKKPLKK.

In terms of assembly, monomer in the presence of Ca(2+). It oligomerizes in absence of Ca(2+). Forms homooligomers and heterooligomers with STIM2. Interacts with pore-forming subunits of CRAC channels, ORAI1, ORAI2 and ORAI3; this interaction is potentiated upon Ca(2+) store depletion. Interacts (via the transmembrane region and the SOAR/CAD domain) with SPPL3; the interaction promotes the binding of STIM1 to ORAI1. Interacts with ORAI1. Interacts with MAPRE1; probably required for targeting to the growing microtubule plus ends. Interacts with CRACR2A/EFCAB4B; the interaction is direct and takes place in absence of Ca(2+). Forms a complex with CRACR2A/EFCAB4B and ORAI1 at low concentration of Ca(2+), the complex dissociates at elevated Ca(2+) concentrations. Interacts with SARAF, promoting a slow inactivation of STIM1-dependent SOCE activity, possibly by facilitating the deoligomerization of STIM1. Interacts with EFHB; the interaction takes place upon Ca(2+)-store depletion and inhibits the association with SARAF. Interacts with ASPH. Interacts with SLC35G1; intracellular Ca(2+)-dependent. May interact with ATP1A1, ATP2A2, ATP2B1, ATP2B4, KPNB1 and XPO1; through SLC35G1. Interacts with STIMATE, promoting STIM1 conformational switch. Interacts with TMEM178A. Interacts with CASQ1 (via C-terminal end and preferentially with the monomeric form); this interaction increases in response to a depletion of intracellular Ca(2+), decreases both STIM1 aggregation and clustering, interaction of STIM1 with ORAI1 and store-operated Ca(2+) entry (SOCE) activity. Interacts with ADCY8. Interacts with TMEM203. In terms of processing, glycosylation is required for cell surface expression. Phosphorylated predominantly on Ser residues. As to expression, expressed in maturation-stage ameloblasts (at protein level). Expressed in all tissues examined and in many cell types, including bone marrow stroma, fibroblast, B-cell precursors, lymphoma and erythroleukemia.

It is found in the cell membrane. The protein resides in the endoplasmic reticulum membrane. The protein localises to the sarcoplasmic reticulum. Its subcellular location is the cytoplasm. It localises to the cytoskeleton. Functionally, acts as a Ca(2+) sensor that gates two major inward rectifying Ca(2+) channels at the plasma membrane: Ca(2+) release-activated Ca(2+) (CRAC) channels and arachidonate-regulated Ca(2+)-selective (ARC) channels. Plays a role in mediating store-operated Ca(2+) entry (SOCE), a Ca(2+) influx following depletion of intracellular Ca(2+) stores. Upon Ca(2+) depletion, translocates from the endoplasmic reticulum to the plasma membrane where it activates CRAC channel pore-forming subunits ORA1, ORA2 and ORAI3 to generate sustained and oscillatory Ca(2+) entry. Involved in enamel formation. This chain is Stromal interaction molecule 1 (Stim1), found in Mus musculus (Mouse).